The primary structure comprises 251 residues: Large ribosomal subunit protein uL16m (251 aa).

The transit peptide at Met1–Gly29 directs the protein to the mitochondrion.

It belongs to the universal ribosomal protein uL16 family. As to quaternary structure, component of the mitochondrial ribosome large subunit (39S) which comprises a 16S rRNA and about 50 distinct proteins.

Its subcellular location is the mitochondrion. This is Large ribosomal subunit protein uL16m (MRPL16) from Bos taurus (Bovine).